The primary structure comprises 143 residues: Interferon gamma (143 aa).

Glutamine 1 is modified (pyrrolidone carboxylic acid). N-linked (GlcNAc...) asparagine glycans are attached at residues asparagine 25 and asparagine 97.

It belongs to the type II (or gamma) interferon family. As to quaternary structure, homodimer. Interacts with IFNGR1 (via extracellular domain); this interaction promotes IFNGR1 dimerization.

It localises to the secreted. Its function is as follows. Type II interferon produced by immune cells such as T-cells and NK cells that plays crucial roles in antimicrobial, antiviral, and antitumor responses by activating effector immune cells and enhancing antigen presentation. Primarily signals through the JAK-STAT pathway after interaction with its receptor IFNGR1 to affect gene regulation. Upon IFNG binding, IFNGR1 intracellular domain opens out to allow association of downstream signaling components JAK2, JAK1 and STAT1, leading to STAT1 activation, nuclear translocation and transcription of IFNG-regulated genes. Many of the induced genes are transcription factors such as IRF1 that are able to further drive regulation of a next wave of transcription. Plays a role in class I antigen presentation pathway by inducing a replacement of catalytic proteasome subunits with immunoproteasome subunits. In turn, increases the quantity, quality, and repertoire of peptides for class I MHC loading. Increases the efficiency of peptide generation also by inducing the expression of activator PA28 that associates with the proteasome and alters its proteolytic cleavage preference. Up-regulates as well MHC II complexes on the cell surface by promoting expression of several key molecules such as cathepsins B/CTSB, H/CTSH, and L/CTSL. Participates in the regulation of hematopoietic stem cells during development and under homeostatic conditions by affecting their development, quiescence, and differentiation. The sequence is that of Interferon gamma (IFNG) from Pan troglodytes (Chimpanzee).